Reading from the N-terminus, the 405-residue chain is Riboflavin biosynthesis protein RibBA (405 aa).

A DHBP synthase region spans residues 1 to 205; it reads MEEIKLNTIE…IKDLIAYRLK (205 aa). Residues 30–31, D35, 144–148, and E168 each bind D-ribulose 5-phosphate; these read RE and RAGHT. A Mg(2+)-binding site is contributed by E31. Residue H147 coordinates Mg(2+). Positions 206 to 405 are GTP cyclohydrolase II; sequence QESIVEKGVE…RMGHELHNIK (200 aa). GTP is bound at residue 256 to 260; that stretch reads RMHSS. Residues C261, C272, and C274 each contribute to the Zn(2+) site. Residues Q277, 299–301, and T321 contribute to the GTP site; that span reads EGR. D333 serves as the catalytic Proton acceptor; for GTP cyclohydrolase activity. R335 functions as the Nucleophile; for GTP cyclohydrolase activity in the catalytic mechanism. T356 and K361 together coordinate GTP.

In the N-terminal section; belongs to the DHBP synthase family. The protein in the C-terminal section; belongs to the GTP cyclohydrolase II family. The cofactor is Mg(2+). Mn(2+) serves as cofactor. Requires Zn(2+) as cofactor.

The enzyme catalyses D-ribulose 5-phosphate = (2S)-2-hydroxy-3-oxobutyl phosphate + formate + H(+). It carries out the reaction GTP + 4 H2O = 2,5-diamino-6-hydroxy-4-(5-phosphoribosylamino)-pyrimidine + formate + 2 phosphate + 3 H(+). It participates in cofactor biosynthesis; riboflavin biosynthesis; 2-hydroxy-3-oxobutyl phosphate from D-ribulose 5-phosphate: step 1/1. Its pathway is cofactor biosynthesis; riboflavin biosynthesis; 5-amino-6-(D-ribitylamino)uracil from GTP: step 1/4. Functionally, catalyzes the conversion of D-ribulose 5-phosphate to formate and 3,4-dihydroxy-2-butanone 4-phosphate. Catalyzes the conversion of GTP to 2,5-diamino-6-ribosylamino-4(3H)-pyrimidinone 5'-phosphate (DARP), formate and pyrophosphate. The polypeptide is Riboflavin biosynthesis protein RibBA (Porphyromonas gingivalis (strain ATCC 33277 / DSM 20709 / CIP 103683 / JCM 12257 / NCTC 11834 / 2561)).